A 115-amino-acid chain; its full sequence is Disintegrin EC6 subunit alpha (115 aa).

The signal sequence occupies residues methionine 1 to serine 20. Residues isoleucine 21–methionine 47 constitute a propeptide that is removed on maturation. The 65-residue stretch at asparagine 48 to lysine 112 folds into the Disintegrin domain. 4 disulfide bridges follow: cysteine 53/cysteine 76, cysteine 67/cysteine 73, cysteine 72/cysteine 97, and cysteine 85/cysteine 104. Positions methionine 89 to aspartate 91 match the Cell attachment site; atypical (MLD) motif.

It belongs to the disintegrin family. Dimeric disintegrin subfamily. In terms of assembly, heterodimer with subunit beta; disulfide-linked. As to expression, expressed by the venom gland.

It localises to the secreted. Potently inhibits adhesion of alpha-4/beta-1 (ITGA4/ITGB1) and alpha-9/beta-1 (ITGA9/ITGB1) integrins to VCAM1, and adhesion of alpha-5/beta-1 (ITGA5/ITGB1) integrin to fibronectin. Has a much less effect on alpha-IIb/beta-3 (ITGA2B/ITGB3) integrin. Also potently inhibits neutrophil migration across TNF-alpha-activated human umbilical endothelial cells. This chain is Disintegrin EC6 subunit alpha, found in Echis carinatus sochureki (Saw-scaled viper).